Consider the following 375-residue polypeptide: Chaperone protein DnaJ (375 aa).

Positions 5-70 (DYYEVLGVER…SKRAAFDQYG (66 aa)) constitute a J domain. A CR-type zinc finger spans residues 134–212 (GTTVSIRVPT…CHGEGRVEEY (79 aa)). Zn(2+)-binding residues include Cys147, Cys150, Cys164, Cys167, Cys186, Cys189, Cys200, and Cys203. 4 CXXCXGXG motif repeats span residues 147-154 (CQPCDGSG), 164-171 (CPTCGGIG), 186-193 (CPRCHGQG), and 200-207 (CTSCHGEG).

This sequence belongs to the DnaJ family. Homodimer. Zn(2+) serves as cofactor.

It is found in the cytoplasm. Functionally, participates actively in the response to hyperosmotic and heat shock by preventing the aggregation of stress-denatured proteins and by disaggregating proteins, also in an autonomous, DnaK-independent fashion. Unfolded proteins bind initially to DnaJ; upon interaction with the DnaJ-bound protein, DnaK hydrolyzes its bound ATP, resulting in the formation of a stable complex. GrpE releases ADP from DnaK; ATP binding to DnaK triggers the release of the substrate protein, thus completing the reaction cycle. Several rounds of ATP-dependent interactions between DnaJ, DnaK and GrpE are required for fully efficient folding. Also involved, together with DnaK and GrpE, in the DNA replication of plasmids through activation of initiation proteins. The sequence is that of Chaperone protein DnaJ from Pseudomonas putida (strain ATCC 47054 / DSM 6125 / CFBP 8728 / NCIMB 11950 / KT2440).